Here is a 329-residue protein sequence, read N- to C-terminus: MMSNSSSEIDVVKTRIPTYDEDDDTILYAYETKPEFVNKEPNIVSDASCNTEEQLKTVNDVLIHCQVIYDAMQNLDKKIDVIRRKVSKIQRFHARFLWANRKRYGYKKHSYRLVKKLKLQKMKKNEVYETFSYPESYSPTLPVSRRENNSPSNLPRPSFCMEEYQRAEPEEDPILSRTLSPVHPSDFSEHNYQPYYASDGAAYGSSSGLCLGNPRADSIHDTYSTDQASAAPPSVTRSPFENDGYIEKGSITKHPSTWSVEAVVLFLKQTDPLALCPLVDLFRSHEIDGKALLLLTSDVLLKHLGVKLGTAVKLCYYIDRLKQGKCFEN.

Residues Ser-138 and Ser-238 each carry the phosphoserine modification. Positions Ser-138–Pro-157 are disordered. The SAM domain occupies Trp-258–Lys-325.

This sequence belongs to the SCM family.

The protein resides in the nucleus. Its function is as follows. Putative Polycomb group (PcG) protein. PcG proteins act by forming multiprotein complexes, which are required to maintain the transcriptionally repressive state of homeotic genes throughout development. May be involved in spermatogenesis during sexual maturation. The protein is Sex comb on midleg-like protein 1 (SCML1) of Gorilla gorilla gorilla (Western lowland gorilla).